The chain runs to 188 residues: Accessory gene regulator protein B (188 aa).

4 helical membrane-spanning segments follow: residues 49 to 69 (LALL…FLTL), 104 to 126 (ISFQ…YAPA), 143 to 163 (IKSI…PPPY), and 166 to 186 (FVVY…SIKE).

It belongs to the AgrB family.

Its subcellular location is the cell membrane. In terms of biological role, essential for the production of a quorum sensing system signal molecule, the autoinducing peptide (AIP). This quorum sensing system is responsible for the regulation of the expression of virulence factor genes. Involved in the proteolytic processing of AgrD, the precursor of AIP. The chain is Accessory gene regulator protein B from Staphylococcus intermedius.